The primary structure comprises 341 residues: Holliday junction branch migration complex subunit RuvB (341 aa).

Residues 1–182 (MTERFVTPDF…FGVICRLEFY (182 aa)) are large ATPase domain (RuvB-L). Residues Leu-21, Arg-22, Gly-63, Lys-66, Thr-67, Thr-68, 129 to 131 (EDY), Arg-172, Tyr-182, and Arg-219 each bind ATP. A Mg(2+)-binding site is contributed by Thr-67. Positions 183 to 253 (TDDELATIAG…IADMALSRLE (71 aa)) are small ATPAse domain (RuvB-S). Residues 256-341 (NCGLDHMDRL…RGKTSGELFS (86 aa)) form a head domain (RuvB-H) region. DNA contacts are provided by Arg-311 and Arg-316.

It belongs to the RuvB family. In terms of assembly, homohexamer. Forms an RuvA(8)-RuvB(12)-Holliday junction (HJ) complex. HJ DNA is sandwiched between 2 RuvA tetramers; dsDNA enters through RuvA and exits via RuvB. An RuvB hexamer assembles on each DNA strand where it exits the tetramer. Each RuvB hexamer is contacted by two RuvA subunits (via domain III) on 2 adjacent RuvB subunits; this complex drives branch migration. In the full resolvosome a probable DNA-RuvA(4)-RuvB(12)-RuvC(2) complex forms which resolves the HJ.

It localises to the cytoplasm. The enzyme catalyses ATP + H2O = ADP + phosphate + H(+). The RuvA-RuvB-RuvC complex processes Holliday junction (HJ) DNA during genetic recombination and DNA repair, while the RuvA-RuvB complex plays an important role in the rescue of blocked DNA replication forks via replication fork reversal (RFR). RuvA specifically binds to HJ cruciform DNA, conferring on it an open structure. The RuvB hexamer acts as an ATP-dependent pump, pulling dsDNA into and through the RuvAB complex. RuvB forms 2 homohexamers on either side of HJ DNA bound by 1 or 2 RuvA tetramers; 4 subunits per hexamer contact DNA at a time. Coordinated motions by a converter formed by DNA-disengaged RuvB subunits stimulates ATP hydrolysis and nucleotide exchange. Immobilization of the converter enables RuvB to convert the ATP-contained energy into a lever motion, pulling 2 nucleotides of DNA out of the RuvA tetramer per ATP hydrolyzed, thus driving DNA branch migration. The RuvB motors rotate together with the DNA substrate, which together with the progressing nucleotide cycle form the mechanistic basis for DNA recombination by continuous HJ branch migration. Branch migration allows RuvC to scan DNA until it finds its consensus sequence, where it cleaves and resolves cruciform DNA. In Syntrophotalea carbinolica (strain DSM 2380 / NBRC 103641 / GraBd1) (Pelobacter carbinolicus), this protein is Holliday junction branch migration complex subunit RuvB.